The chain runs to 288 residues: Light-independent protochlorophyllide reductase iron-sulfur ATP-binding protein (288 aa).

ATP contacts are provided by residues glycine 10 to threonine 15 and lysine 39. Serine 14 contacts Mg(2+). Cysteine 95 and cysteine 129 together coordinate [4Fe-4S] cluster. Asparagine 180 to arginine 181 lines the ATP pocket.

This sequence belongs to the NifH/BchL/ChlL family. In terms of assembly, homodimer. Protochlorophyllide reductase is composed of three subunits; ChlL, ChlN and ChlB. [4Fe-4S] cluster serves as cofactor.

It carries out the reaction chlorophyllide a + oxidized 2[4Fe-4S]-[ferredoxin] + 2 ADP + 2 phosphate = protochlorophyllide a + reduced 2[4Fe-4S]-[ferredoxin] + 2 ATP + 2 H2O. Its pathway is porphyrin-containing compound metabolism; chlorophyll biosynthesis (light-independent). In terms of biological role, component of the dark-operative protochlorophyllide reductase (DPOR) that uses Mg-ATP and reduced ferredoxin to reduce ring D of protochlorophyllide (Pchlide) to form chlorophyllide a (Chlide). This reaction is light-independent. The L component serves as a unique electron donor to the NB-component of the complex, and binds Mg-ATP. The chain is Light-independent protochlorophyllide reductase iron-sulfur ATP-binding protein from Nostoc punctiforme (strain ATCC 29133 / PCC 73102).